The following is a 317-amino-acid chain: Apolipoprotein E (317 aa).

The first 18 residues, 1-18 (MKVLWAALLVTFLAGCQA), serve as a signal peptide directing secretion. O-linked (GalNAc...) threonine glycosylation is found at threonine 26 and threonine 36. 8 repeat units span residues 80-101 (ALMDETMKELKAYKSELEEQLT), 102-123 (PVAEETRARLSKELQAAQARLG), 124-145 (ADMEDVCGRLVQYRGEVQAMLG), 146-167 (QSTEELRVRLASHLRKLRKRLL), 168-189 (RDADDLQKRLAVYQAGAREGAE), 190-211 (RGLSAIRERLGPLVEQGRVRAA), 212-233 (TVGSLAGQPLQERAQAWGERLR), and 234-255 (ARMEEMGSRTRDRLDEVKEQVA). Residues 80–255 (ALMDETMKEL…RLDEVKEQVA (176 aa)) form an 8 X 22 AA approximate tandem repeats region. An N-linked (Glc) (glycation) lysine glycan is attached at lysine 93. Residue methionine 143 is modified to Methionine sulfoxide. At serine 147 the chain carries Phosphoserine; by FAM20C. The LDL and other lipoprotein receptors binding stretch occupies residues 158–168 (HLRKLRKRLLR). 162–165 (LRKR) is a heparin binding site. The tract at residues 210 to 290 (AATVGSLAGQ…SWFEPLVEDM (81 aa)) is lipid-binding and lipoprotein association. O-linked (GalNAc...) threonine glycosylation is present at threonine 212. Heparin is bound at residue 229–236 (GERLRARM). The segment at 266-317 (QQIRLQAEAFQARLKSWFEPLVEDMQRQWAGLVEKVQAAVGTSAAPVPSDNH) is homooligomerization. The interval 278–290 (RLKSWFEPLVEDM) is specificity for association with VLDL. The O-linked (GalNAc...) threonine glycan is linked to threonine 307. Residues serine 308 and serine 314 are each glycosylated (O-linked (GalNAc...) serine).

It belongs to the apolipoprotein A1/A4/E family. As to quaternary structure, homotetramer. May interact with ABCA1; functionally associated with ABCA1 in the biogenesis of HDLs. May interact with APP/A4 amyloid-beta peptide; the interaction is extremely stable in vitro but its physiological significance is unclear. May interact with MAPT. May interact with MAP2. In the cerebrospinal fluid, interacts with secreted SORL1. Interacts with PMEL; this allows the loading of PMEL luminal fragment on ILVs to induce fibril nucleation. (Microbial infection) Interacts with hepatitis C virus (HCV) envelope glycoprotein E2; this interaction is required for HCV infectivity and production. Post-translationally, APOE exists as multiple glycosylated and sialylated glycoforms within cells and in plasma. The extent of glycosylation and sialylation are tissue and context specific. Plasma APOE undergoes desialylation and is less glycosylated and sialylated than the cellular form. Glycosylation is not required for proper expression and secretion. O-glycosylated with core 1 or possibly core 8 glycans. Thr-307 and Ser-314 are minor glycosylation sites compared to Ser-308. Glycated in plasma VLDL of normal subjects, and of hyperglycemic diabetic patients at a higher level (2-3 fold). In terms of processing, phosphorylated by FAM20C in the extracellular medium. Post-translationally, undergoes C-terminal proteolytic processing in neurons. C-terminally truncated APOE has a tendency to form neurotoxic intracellular neurofibrillary tangle-like inclusions in neurons. As to expression, produced by several tissues and cell types and mainly found associated with lipid particles in the plasma, the interstitial fluid and lymph. Mainly synthesized by liver hepatocytes. Significant quantities are also produced in brain, mainly by astrocytes and glial cells in the cerebral cortex, but also by neurons in frontal cortex and hippocampus. It is also expressed by cells of the peripheral nervous system. Also expressed by adrenal gland, testis, ovary, skin, kidney, spleen and adipose tissue and macrophages in various tissues.

The protein resides in the secreted. Its subcellular location is the extracellular space. It localises to the extracellular matrix. The protein localises to the extracellular vesicle. It is found in the endosome. The protein resides in the multivesicular body. In terms of biological role, APOE is an apolipoprotein, a protein associating with lipid particles, that mainly functions in lipoprotein-mediated lipid transport between organs via the plasma and interstitial fluids. APOE is a core component of plasma lipoproteins and is involved in their production, conversion and clearance. Apolipoproteins are amphipathic molecules that interact both with lipids of the lipoprotein particle core and the aqueous environment of the plasma. As such, APOE associates with chylomicrons, chylomicron remnants, very low density lipoproteins (VLDL) and intermediate density lipoproteins (IDL) but shows a preferential binding to high-density lipoproteins (HDL). It also binds a wide range of cellular receptors including the LDL receptor/LDLR, the LDL receptor-related proteins LRP1, LRP2 and LRP8 and the very low-density lipoprotein receptor/VLDLR that mediate the cellular uptake of the APOE-containing lipoprotein particles. Finally, APOE also has a heparin-binding activity and binds heparan-sulfate proteoglycans on the surface of cells, a property that supports the capture and the receptor-mediated uptake of APOE-containing lipoproteins by cells. A main function of APOE is to mediate lipoprotein clearance through the uptake of chylomicrons, VLDLs, and HDLs by hepatocytes. APOE is also involved in the biosynthesis by the liver of VLDLs as well as their uptake by peripheral tissues ensuring the delivery of triglycerides and energy storage in muscle, heart and adipose tissues. By participating in the lipoprotein-mediated distribution of lipids among tissues, APOE plays a critical role in plasma and tissues lipid homeostasis. APOE is also involved in two steps of reverse cholesterol transport, the HDLs-mediated transport of cholesterol from peripheral tissues to the liver, and thereby plays an important role in cholesterol homeostasis. First, it is functionally associated with ABCA1 in the biogenesis of HDLs in tissues. Second, it is enriched in circulating HDLs and mediates their uptake by hepatocytes. APOE also plays an important role in lipid transport in the central nervous system, regulating neuron survival and sprouting. APOE is also involved in innate and adaptive immune responses, controlling for instance the survival of myeloid-derived suppressor cells. Binds to the immune cell receptor LILRB4. APOE may also play a role in transcription regulation through a receptor-dependent and cholesterol-independent mechanism, that activates MAP3K12 and a non-canonical MAPK signal transduction pathway that results in enhanced AP-1-mediated transcription of APP. (Microbial infection) Through its interaction with HCV envelope glycoprotein E2, participates in the attachment of HCV to HSPGs and other receptors (LDLr, VLDLr, and SR-B1) on the cell surface and to the assembly, maturation and infectivity of HCV viral particles. This interaction is probably promoted via the up-regulation of cellular autophagy by the virus. In Homo sapiens (Human), this protein is Apolipoprotein E.